The sequence spans 319 residues: Lipoyl synthase (319 aa).

Cys61, Cys66, Cys72, Cys87, Cys91, Cys94, and Ser300 together coordinate [4Fe-4S] cluster. The Radical SAM core domain occupies Trp73–Leu289.

The protein belongs to the radical SAM superfamily. Lipoyl synthase family. [4Fe-4S] cluster serves as cofactor.

It is found in the cytoplasm. The enzyme catalyses [[Fe-S] cluster scaffold protein carrying a second [4Fe-4S](2+) cluster] + N(6)-octanoyl-L-lysyl-[protein] + 2 oxidized [2Fe-2S]-[ferredoxin] + 2 S-adenosyl-L-methionine + 4 H(+) = [[Fe-S] cluster scaffold protein] + N(6)-[(R)-dihydrolipoyl]-L-lysyl-[protein] + 4 Fe(3+) + 2 hydrogen sulfide + 2 5'-deoxyadenosine + 2 L-methionine + 2 reduced [2Fe-2S]-[ferredoxin]. It functions in the pathway protein modification; protein lipoylation via endogenous pathway; protein N(6)-(lipoyl)lysine from octanoyl-[acyl-carrier-protein]: step 2/2. Catalyzes the radical-mediated insertion of two sulfur atoms into the C-6 and C-8 positions of the octanoyl moiety bound to the lipoyl domains of lipoate-dependent enzymes, thereby converting the octanoylated domains into lipoylated derivatives. The chain is Lipoyl synthase from Rhodopseudomonas palustris (strain BisB18).